A 182-amino-acid chain; its full sequence is Thioredoxin X, chloroplastic (182 aa).

The N-terminal 67 residues, 1–67 (MDSIVSSSTI…TRKSSSSVIR (67 aa)), are a transit peptide targeting the chloroplast. The Thioredoxin domain occupies 68-177 (CGGIKEIGES…LKEYIDGLLN (110 aa)). Residues Cys99 and Cys102 each act as nucleophile in the active site. Cys99 and Cys102 are disulfide-bonded.

Belongs to the thioredoxin family. In terms of tissue distribution, predominantly expressed in leaves.

The protein resides in the plastid. The protein localises to the chloroplast stroma. Functionally, probable thiol-disulfide oxidoreductase that may participate in various redox reactions. The sequence is that of Thioredoxin X, chloroplastic (ATHX) from Arabidopsis thaliana (Mouse-ear cress).